A 486-amino-acid polypeptide reads, in one-letter code: MTTFYTVISWLMVFGYWLLIAGVTLRILMKRRAVPSAMAWLLVIYILPLFGIVAYLSFGELHLGKRRAERAKAMWPSTARWLSELKESQRIFATDYSEVARPLFQLCDRRQGIDGVKGNQLQLLTTTDATLKALIRDIELARHNIEMVFYIWQPGGLVDQVAESLMAAARRGVHCRLMLDSAGSLQFFRSPYPGMMRNAGIEVVEALKVNLFRVFLRRMDLRQHRKVVLIDNYIAYTGSMNMVDPRYFKQDAGVGQWIDLMARMEGPVASTMGIVYACDWEIETGKRILPPPPDVNIMPFEQESGHTIQVIASGPGFPEEMIHQALLTAVYSAREQLIMTTPYFVPSDDLLHAICTAALRGVEVSIIVPRDNDSTMVRWASRSFFSELLEAGVRIYQFEDGLLHTKSVLVDGQLSLVGTVNLDMRSLWLNFEITLVIDDDGFGSDLACVQDDYIARSQLLNAAEWQKRPFWHRIVERLFYFFSPLL.

2 helical membrane-spanning segments follow: residues 3 to 23 (TFYTVISWLMVFGYWLLIAGV) and 38 to 58 (MAWLLVIYILPLFGIVAYLSF). PLD phosphodiesterase domains are found at residues 219–246 (MDLRQHRKVVLIDNYIAYTGSMNMVDPR) and 399–426 (EDGLLHTKSVLVDGQLSLVGTVNLDMRS). Catalysis depends on residues His-224, Lys-226, Asp-231, His-404, Lys-406, and Asp-411.

It belongs to the phospholipase D family. Cardiolipin synthase subfamily. ClsA sub-subfamily.

The protein localises to the cell inner membrane. The catalysed reaction is 2 a 1,2-diacyl-sn-glycero-3-phospho-(1'-sn-glycerol) = a cardiolipin + glycerol. Its function is as follows. Catalyzes the reversible phosphatidyl group transfer from one phosphatidylglycerol molecule to another to form cardiolipin (CL) (diphosphatidylglycerol) and glycerol. This is Cardiolipin synthase A from Serratia proteamaculans (strain 568).